Consider the following 376-residue polypeptide: Nuclear egress protein 1 (376 aa).

At Ser-19 the chain carries Phosphoserine. The segment at 22 to 57 (RKRRQRELASKVASTVNGATSANNHGEPPSPADARP) is disordered. The span at 33 to 45 (VASTVNGATSANN) shows a compositional bias: polar residues. The CCCH-type zinc finger occupies 106–211 (CLDISPYGNE…HVIFENPDVH (106 aa)). Residues 316-376 (VVSTNGCGPS…PLFLNSIRAP (61 aa)) are disordered. Over residues 317–332 (VSTNGCGPSSSSQSTP) the composition is skewed to polar residues.

This sequence belongs to the herpesviridae NEC1 protein family. Forms a heterohexameric complex with NEC2. Interacts with capsid vertex specific component 2/CVC2; this interaction directs the capsid to the host inner nuclear membrane to initiate budding. Post-translationally, phosphorylated at serine residues in the N-terminus. This phosphorylation regulates the localization within the inner nuclear membrane. Phosphorylation by viral kinase UL97 at Ser-19 plays an important role for correct viral nuclear egress complex (NEC) localization.

It localises to the host nucleus inner membrane. Plays an essential role in virion nuclear egress, the first step of virion release from infected cell. Within the host nucleus, NEC1 interacts with the newly formed capsid through the vertexes and directs it to the inner nuclear membrane by associating with NEC2. Induces the budding of the capsid at the inner nuclear membrane as well as its envelopment into the perinuclear space. There, the NEC1/NEC2 complex promotes the fusion of the enveloped capsid with the outer nuclear membrane and the subsequent release of the viral capsid into the cytoplasm where it will reach the secondary budding sites in the host Golgi or trans-Golgi network. The protein is Nuclear egress protein 1 of Homo sapiens (Human).